The sequence spans 250 residues: 4-hydroxy-tetrahydrodipicolinate reductase (250 aa).

NAD(+) contacts are provided by residues 10–15, 78–80, and 105–108; these read GARGRI, GTT, and APNF. The active-site Proton donor/acceptor is H135. Residue H136 participates in (S)-2,3,4,5-tetrahydrodipicolinate binding. The active-site Proton donor is the K139. A (S)-2,3,4,5-tetrahydrodipicolinate-binding site is contributed by 145-146; sequence GT. The interval 158 to 177 is disordered; sequence RAEAGSAPQPDATTTALDGA.

The protein belongs to the DapB family.

The protein localises to the cytoplasm. The catalysed reaction is (S)-2,3,4,5-tetrahydrodipicolinate + NAD(+) + H2O = (2S,4S)-4-hydroxy-2,3,4,5-tetrahydrodipicolinate + NADH + H(+). It carries out the reaction (S)-2,3,4,5-tetrahydrodipicolinate + NADP(+) + H2O = (2S,4S)-4-hydroxy-2,3,4,5-tetrahydrodipicolinate + NADPH + H(+). Its pathway is amino-acid biosynthesis; L-lysine biosynthesis via DAP pathway; (S)-tetrahydrodipicolinate from L-aspartate: step 4/4. Functionally, catalyzes the conversion of 4-hydroxy-tetrahydrodipicolinate (HTPA) to tetrahydrodipicolinate. The chain is 4-hydroxy-tetrahydrodipicolinate reductase from Streptomyces griseus subsp. griseus (strain JCM 4626 / CBS 651.72 / NBRC 13350 / KCC S-0626 / ISP 5235).